We begin with the raw amino-acid sequence, 1943 residues long: Sickle tail protein homolog (1943 aa).

Disordered regions lie at residues 1-79 and 112-177; these read MEEN…KEIL and QERL…RSTN. Residues 38-47 are compositionally biased toward basic and acidic residues; that stretch reads AECRRTKERL. Polar residues predominate over residues 48–62; the sequence is SNGNSRGSVSKSSRN. Residue Ser169 is modified to Phosphoserine. A Phosphotyrosine modification is found at Tyr244. A disordered region spans residues 290-331; sequence ARGDGPGAPRPGSTAHPPHAIPNSPPSTPVPHSMPPSPSRIP. A compositionally biased stretch (pro residues) spans 308–328; that stretch reads HAIPNSPPSTPVPHSMPPSPS. Ser357 carries an O-linked (GlcNAc) serine glycan. Ser361 and Ser365 each carry phosphoserine. Tyr393 is modified (phosphotyrosine). The interval 456-476 is disordered; that stretch reads RKYPDSHLPTLGSKTPPASPH. Thr470 is subject to Phosphothreonine. Phosphoserine is present on residues Ser474 and Ser526. Coiled coils occupy residues 557-581 and 644-685; these read RETR…QSAL and MSLL…ELEI. Ser809 carries the phosphoserine modification. Residues 848–874 are disordered; it reads VLKSQEEAAHTSGQPFHSTGAPGDAKS. Positions 957–985 form a coiled coil; sequence SAKNRAVSIEKAEKKWEEKRQNLDHYNGK. 3 disordered regions span residues 1003–1230, 1305–1329, and 1352–1377; these read PNLE…SDAS, KTKE…TESS, and PKEA…TEEN. Residues Ser1027, Ser1030, Ser1033, and Ser1044 each carry the phosphoserine modification. Residues 1044–1053 are compositionally biased toward pro residues; that stretch reads SPPPPPPPPR. Composition is skewed to basic and acidic residues over residues 1155-1167, 1174-1192, and 1305-1318; these read EPSR…KDTR, PKEK…KSDV, and KTKE…DKCH. Polar residues predominate over residues 1368-1377; it reads SSSSSPTEEN. Position 1461 is a phosphoserine (Ser1461). Residues 1464–1490 adopt a coiled-coil conformation; the sequence is FEECDEELERMMMEEKIEEEEEEENGD. Disordered regions lie at residues 1481–1572, 1606–1660, and 1677–1943; these read EEEE…PKKK, EEEE…EIRK, and ENTI…KETS. 2 stretches are compositionally biased toward polar residues: residues 1491 to 1501 and 1512 to 1533; these read SVVQNNNTSQM and RTGQ…TRNP. 2 stretches are compositionally biased toward basic and acidic residues: residues 1539 to 1548 and 1612 to 1625; these read NRTELNKFSH and GTLK…RFEI. Polar residues predominate over residues 1643-1653; it reads QPSIESTSPIS. Residues 1656–1686 are a coiled coil; that stretch reads DEIRKNTYRTLDSLEQTIKQLENTISEMSPK. Polar residues-rich tracts occupy residues 1691 to 1706 and 1731 to 1747; these read TSCS…SSHI and IPSA…QTSR. Ser1739 bears the Phosphoserine mark. Positions 1763-1775 are enriched in basic and acidic residues; that stretch reads KPGKQSKLQDPRQ. Residues 1806 to 1825 show a composition bias toward low complexity; the sequence is SPSSGKSSSLPSSSGDSSNL. Composition is skewed to polar residues over residues 1834–1843 and 1853–1869; these read SIASNPLSPQ and LIPS…SLTH. Ser1841 carries the post-translational modification Phosphoserine. Residues 1892 to 1905 are compositionally biased toward low complexity; the sequence is SFSSSPPSPASSVS. Ser1896, Ser1899, and Ser1902 each carry phosphoserine. Positions 1906–1943 are enriched in polar residues; it reads LNQGAKGTRTIHTPSLTSYKAQNGSSSKATPSTAKETS.

In terms of assembly, interacts with CPNE4 (via VWFA domain).

It is found in the cytoplasm. The protein resides in the cytoskeleton. The protein localises to the microtubule organizing center. Its subcellular location is the centrosome. Functionally, required for normal development of intervertebral disks. This chain is Sickle tail protein homolog (KIAA1217), found in Homo sapiens (Human).